The primary structure comprises 117 residues: Large ribosomal subunit protein bL20c (117 aa).

Belongs to the bacterial ribosomal protein bL20 family.

The protein localises to the plastid. It localises to the chloroplast. Binds directly to 23S ribosomal RNA and is necessary for the in vitro assembly process of the 50S ribosomal subunit. It is not involved in the protein synthesizing functions of that subunit. The polypeptide is Large ribosomal subunit protein bL20c (rpl20) (Arabidopsis thaliana (Mouse-ear cress)).